A 185-amino-acid polypeptide reads, in one-letter code: Lysozyme g (185 aa).

2 cysteine pairs are disulfide-bonded: Cys4-Cys60 and Cys18-Cys29. Glu73 is an active-site residue.

This sequence belongs to the glycosyl hydrolase 23 family.

It localises to the secreted. It catalyses the reaction Hydrolysis of (1-&gt;4)-beta-linkages between N-acetylmuramic acid and N-acetyl-D-glucosamine residues in a peptidoglycan and between N-acetyl-D-glucosamine residues in chitodextrins.. The polypeptide is Lysozyme g (Cygnus atratus (Black swan)).